The chain runs to 517 residues: Serine O-succinyltransferase (517 aa).

The transit peptide at 1 to 46 directs the protein to the mitochondrion; sequence MSPLNGVARSLPRPFQAVARRPFRVAQPAVACPSNRRSFNHSRSLR. The segment at 34 to 66 is disordered; it reads SNRRSFNHSRSLRSTGSQSPAPSPRDSSNPALS. Positions 45 to 64 are enriched in polar residues; it reads LRSTGSQSPAPSPRDSSNPA. The region spanning 134 to 386 is the AB hydrolase-1 domain; that stretch reads NVILLHTGLS…LTQQLATKKQ (253 aa). The segment at 141–144 is important for substrate specificity; sequence GLSA. Ser-238 acts as the Nucleophile in catalysis. Arg-307 provides a ligand contact to substrate. Residues 413–436 form a disordered region; the sequence is QPYQEQPSASTSAEQSASASETGS. A compositionally biased stretch (low complexity) spans 416 to 436; the sequence is QEQPSASTSAEQSASASETGS. Active-site residues include Asp-461 and His-498. Asp-499 serves as a coordination point for substrate.

This sequence belongs to the AB hydrolase superfamily. MetX family.

The protein localises to the mitochondrion. It carries out the reaction succinyl-CoA + L-serine = O-succinyl-L-serine + CoA. Its pathway is amino-acid biosynthesis; L-cysteine biosynthesis; L-cysteine from L-serine: step 1/2. Transfers a succinyl group from succinyl-CoA to L-serine, forming succinyl-L-serine. Also has weak serine acetyl transferase activity and homoserine succinyl transferase activity. This chain is Serine O-succinyltransferase, found in Emericella nidulans (Aspergillus nidulans).